A 202-amino-acid chain; its full sequence is Cytochrome c oxidase assembly protein CtaG (202 aa).

Over 1 to 13 (MSDKAAAPKKQGR) the chain is Cytoplasmic. A helical; Signal-anchor for type II membrane protein membrane pass occupies residues 14–36 (NNGAVVLMCLSFVFGMGAMSYAA). The Periplasmic segment spans residues 37 to 202 (VPLYRIFCQV…GGAEKVEKKL (166 aa)). Residues 183-202 (EGPKPLASNEGGAEKVEKKL) are disordered.

This sequence belongs to the COX11/CtaG family.

It is found in the cell inner membrane. Exerts its effect at some terminal stage of cytochrome c oxidase synthesis, probably by being involved in the insertion of the copper B into subunit I. This chain is Cytochrome c oxidase assembly protein CtaG, found in Rhizobium etli (strain CIAT 652).